Reading from the N-terminus, the 299-residue chain is MACSHQKNEQMRVGKPKWLRRSLPTGPEYEKIRTLLKGSGLTTVCQEAQCPNQFECYSKGTATFMIMGDHCTRNCRFCAVAHGPKALPDEDEAERVADAVSLLGLRYAVITSVTRDDLADGGASCFVRVIEAIRKKNPKTLIEVLIPDLAGNWGALQTILDARPDVLNHNIETVPRLYSVARPGAEYRRSLELLREVRRRAPQMVTKTGMMLGLGEETEELYATWQDLRESDCDILTMGQYLQPTVDHLLVQRFVEPTEFDRLGDVALAKDFLAVASGPFVRSSYEAEKLFRKAELARK.

7 residues coordinate [4Fe-4S] cluster: Cys45, Cys50, Cys56, Cys71, Cys75, Cys78, and Ser284. Residues Tyr57–Leu273 enclose the Radical SAM core domain.

The protein belongs to the radical SAM superfamily. Lipoyl synthase family. [4Fe-4S] cluster is required as a cofactor.

Its subcellular location is the cytoplasm. The catalysed reaction is [[Fe-S] cluster scaffold protein carrying a second [4Fe-4S](2+) cluster] + N(6)-octanoyl-L-lysyl-[protein] + 2 oxidized [2Fe-2S]-[ferredoxin] + 2 S-adenosyl-L-methionine + 4 H(+) = [[Fe-S] cluster scaffold protein] + N(6)-[(R)-dihydrolipoyl]-L-lysyl-[protein] + 4 Fe(3+) + 2 hydrogen sulfide + 2 5'-deoxyadenosine + 2 L-methionine + 2 reduced [2Fe-2S]-[ferredoxin]. Its pathway is protein modification; protein lipoylation via endogenous pathway; protein N(6)-(lipoyl)lysine from octanoyl-[acyl-carrier-protein]: step 2/2. Catalyzes the radical-mediated insertion of two sulfur atoms into the C-6 and C-8 positions of the octanoyl moiety bound to the lipoyl domains of lipoate-dependent enzymes, thereby converting the octanoylated domains into lipoylated derivatives. In Desulfotalea psychrophila (strain LSv54 / DSM 12343), this protein is Lipoyl synthase.